The sequence spans 483 residues: MTLRLYDSLTRAKQPLQPLHPGLVTMYCCGITVYDYCHLGHARTCITWDLVRRYLQWSGYEVRYVQNFTDIDDKILKRAVDESSTMEAVSEKFIAAYFEDMEALGVQPADLYPRATHTLDGIKRLIAELEAKGYAYPSGGDVYYSVRNFDGYGKLSGRRLEDLQAGASGRVTVADPDGAQKQDPFDFALWKSAKPGEPAWESPWGKGRPGWHIECSAMVREFLGETIDLHVGGNDLIFPHHENEIAQSEAVTGQPLAQYWLHNGMVKVDGEKMSKSLGNFTTIRALLKTVDPMAIRLLVLQGHYRKPLDFTETAIAAATNGWHTLREGLQFGYDYGGDFGWELAFTPLGPDANQWTVAFQEAVDDDFNFAGGLAVMFELAKHLRSEGNKLKFEGSTPADLDLLQTQWITLVSLAEILGLSINPESQSSNDNGLTDGDIEQLVAQRTQARKDKNWAEGDRLRDVLQEAGITLVDKPGGLTEWFR.

Cys29 is a binding site for Zn(2+). Residues Ile31–His41 carry the 'HIGH' region motif. Residues Cys215, His240, and Glu244 each contribute to the Zn(2+) site. The 'KMSKS' region motif lies at Lys272 to Ser276. Position 275 (Lys275) interacts with ATP.

The protein belongs to the class-I aminoacyl-tRNA synthetase family. Monomer. It depends on Zn(2+) as a cofactor.

Its subcellular location is the cytoplasm. The catalysed reaction is tRNA(Cys) + L-cysteine + ATP = L-cysteinyl-tRNA(Cys) + AMP + diphosphate. This is Cysteine--tRNA ligase (cysS) from Synechocystis sp. (strain ATCC 27184 / PCC 6803 / Kazusa).